Here is a 462-residue protein sequence, read N- to C-terminus: Flavin-containing monooxygenase FMO GS-OX3 (462 aa).

17 to 22 contacts FAD; that stretch reads GAGPAG. 212–217 contacts NADP(+); the sequence is GNFASG. A helical transmembrane segment spans residues 318 to 338; sequence ALAPGLAFVGLPAMGIVFVMF.

The protein belongs to the FMO family.

The protein localises to the membrane. It catalyses the reaction a (Z)-omega-(methylsulfanyl)-N-sulfo-alkylhydroximate S-glucoside + NADPH + O2 + H(+) = a (Z)-omega-(methylsulfinyl)-alkyl-glucosinolate + NADP(+) + H2O. In terms of biological role, catalyzes the conversion of methylthioalkyl glucosinolates of any chain length into methylsulfinylalkyl glucosinolates. Prefers probably short-chain methylthioalkyl glucosinolates in cv. Landsberg erecta. The polypeptide is Flavin-containing monooxygenase FMO GS-OX3 (FMOGS-OX3) (Arabidopsis thaliana (Mouse-ear cress)).